A 309-amino-acid chain; its full sequence is Taste receptor type 2 member 46 (309 aa).

Met1 is a topological domain (extracellular). The chain crosses the membrane as a helical span at residues 2–22; it reads ITFLPIIFSILIVVTFVIGNF. Residues 23–46 are Cytoplasmic-facing; sequence ANGFIALANSIEWFKRQKISFADQ. The chain crosses the membrane as a helical span at residues 47–67; sequence ILTALAVSRVGLLWVLLLNWY. At 68-86 the chain is on the extracellular side; it reads ATELNPAFYSIEVRITAYN. A helical transmembrane segment spans residues 87-107; it reads LWAVINHFSNWLATSLSIFYL. At 108–126 the chain is on the cytoplasmic side; it reads LKIANFSNLIFLRLKRRVK. The helical transmembrane segment at 127–147 threads the bilayer; the sequence is SVVLVILLGPLLFLVCHLFVI. Residues 148–178 are Extracellular-facing; it reads NMNQIIWTKEYEGNMTWKIKLRSAMYLSNIT. N-linked (GlcNAc...) asparagine glycans are attached at residues Asn161 and Asn176. Residues 179–199 traverse the membrane as a helical segment; it reads VTILANLVPFTLTLISFLLLI. Topologically, residues 200-229 are cytoplasmic; it reads CSLCKHLKKMQLHGKGSQDPSMKVHIKALQ. Residues 230–250 form a helical membrane-spanning segment; that stretch reads TVTSFLLLCAIYFLSIIMSVW. Over 251-259 the chain is Extracellular; sequence SFESLENKP. The helical transmembrane segment at 260-280 threads the bilayer; sequence VFMFCEAITFSYPSTHPFILI. At 281–309 the chain is on the cytoplasmic side; sequence WGNKKLKQTFLSVLWHVRYWVKGEEPSSP.

The protein belongs to the G-protein coupled receptor T2R family.

The protein localises to the membrane. Its subcellular location is the cell projection. It is found in the cilium membrane. Receptor that may play a role in the perception of bitterness and is gustducin-linked. May play a role in sensing the chemical composition of the gastrointestinal content. The activity of this receptor may stimulate alpha gustducin, mediate PLC-beta-2 activation and lead to the gating of TRPM5. In airway epithelial cells, binding of bitter compounds increases the intracellular calcium ion concentration and stimulates ciliary beat frequency. The chain is Taste receptor type 2 member 46 (TAS2R46) from Pan paniscus (Pygmy chimpanzee).